A 150-amino-acid polypeptide reads, in one-letter code: Monothiol glutaredoxin-5, mitochondrial (150 aa).

The N-terminal 29 residues, 1–29 (MFLPKFNPIRSFSPILRAKTLLRYQNRMY), are a transit peptide targeting the mitochondrion. The region spanning 35–140 (RKAIEDAIES…DLLEEAQALV (106 aa)) is the Glutaredoxin domain. Lysine 52 serves as a coordination point for glutathione. Cysteine 60 provides a ligand contact to [2Fe-2S] cluster. Glutathione-binding positions include 92 to 96 (REGIK), isoleucine 104, and 117 to 118 (CD).

Belongs to the glutaredoxin family. Monothiol subfamily. In terms of assembly, homodimer. Interacts with SSQ1. Interacts with BOL1.

Its subcellular location is the mitochondrion matrix. Functionally, monothiol glutaredoxin involved in mitochondrial iron-sulfur (Fe/S) cluster transfer. Receives 2Fe/2S clusters from scaffold protein ISU1 and mediates their transfer to apoproteins, to the 4Fe/FS cluster biosynthesis machinery, or export from mitochondrion. The polypeptide is Monothiol glutaredoxin-5, mitochondrial (Saccharomyces cerevisiae (strain ATCC 204508 / S288c) (Baker's yeast)).